Reading from the N-terminus, the 130-residue chain is Small ribosomal subunit protein uS9 (130 aa).

This sequence belongs to the universal ribosomal protein uS9 family.

The sequence is that of Small ribosomal subunit protein uS9 from Stutzerimonas stutzeri (strain A1501) (Pseudomonas stutzeri).